The sequence spans 432 residues: 5-hydroxybenzimidazole synthase BzaA (432 aa).

Substrate is bound by residues M95, Y124, H163, 185–187, and 226–229; these read SYG and DGMR. H269 provides a ligand contact to Zn(2+). F292 is a binding site for substrate. H333 is a binding site for Zn(2+). Residues C409, C412, and C416 each coordinate [4Fe-4S] cluster.

The protein belongs to the ThiC family. 5-hydroxybenzimidazole synthase subfamily. [4Fe-4S] cluster is required as a cofactor.

The enzyme catalyses 5-amino-1-(5-phospho-beta-D-ribosyl)imidazole + AH2 + S-adenosyl-L-methionine = 5-hydroxybenzimidazole + 5'-deoxyadenosine + formate + L-methionine + A + NH4(+) + phosphate + 2 H(+). Together with BzaB, probably catalyzes the conversion of aminoimidazole ribotide (AIR) to 5-hydroxybenzimidazole (5-HBI) in a radical S-adenosyl-L-methionine (SAM)-dependent reaction. Is thus involved in the anaerobic biosynthesis of the benzimidazole lower axial ligand of the cobamide produced by M.thermoacetica. Requires BzaB for catalytic activity, as BzaA alone displays no activity. The chain is 5-hydroxybenzimidazole synthase BzaA from Moorella thermoacetica (strain ATCC 39073 / JCM 9320).